A 416-amino-acid polypeptide reads, in one-letter code: PTS system N-acetylglucosamine-specific EIIC component (416 aa).

Positions 16–406 (SGLFQGLQKV…FNLKTPGREP (391 aa)) constitute a PTS EIIC type-1 domain. Helical transmembrane passes span 68–88 (AGGALTGSLPILFCIGVAIGF), 96–116 (TALAAVVGFLVYSKVLEAFPV), 130–150 (TYNDPGVLGGIIMGLLAAVLW), 170–190 (LVPIIMAFVGIVVGVFFGLVW), 196–216 (GISNFGEWMTGLGSGGAALFG), 266–286 (IFQAGFFPIMMFGLPAAALAM), 298–318 (VLGMMISLAATSFVTGVTEPI), 323–343 (MFIAPVLYVLHAVLTAISMAI), 344–364 (TWGLGVHAGFNFSAGFIDYAL), and 375–395 (IIPIGLVFAAIYYVTFRFAIV).

The protein localises to the cell membrane. Functionally, the phosphoenolpyruvate-dependent sugar phosphotransferase system (sugar PTS), a major carbohydrate active transport system, catalyzes the phosphorylation of incoming sugar substrates concomitantly with their translocation across the cell membrane. This system is involved in N-acetylglucosamine (GlcNAc) transport. High-affinity permease, which exhibits a narrow specificity for GlcNAc. Essential for C-signaling between vegetative growth and development. The polypeptide is PTS system N-acetylglucosamine-specific EIIC component (Streptomyces coelicolor (strain ATCC BAA-471 / A3(2) / M145)).